Here is a 320-residue protein sequence, read N- to C-terminus: Olfactory receptor 51E2 (320 aa).

Over 1–24 (MSSCNFTHATFVLIGIPGLEKAHF) the chain is Extracellular. N-linked (GlcNAc...) asparagine glycosylation is present at Asn-5. Residues 25-45 (WVGFPLLSMYVVAMFGNCIVV) form a helical membrane-spanning segment. At 46–53 (FIVRTERS) the chain is on the cytoplasmic side. The chain crosses the membrane as a helical span at residues 54–74 (LHAPMYLFLCMLAAIDLALST). Over 75-98 (STMPKILALFWFDSREISFEACLT) the chain is Extracellular. A disulfide bridge connects residues Cys-96 and Cys-178. The chain crosses the membrane as a helical span at residues 99-119 (QMFFIHALSAIESTILLAMAF). Residues 120–138 (DRYVAICHPLRHAAVLNNT) are Cytoplasmic-facing. Residues 139 to 159 (VTAQIGIVAVVRGSLFFFPLP) form a helical membrane-spanning segment. Topologically, residues 160-195 (LLIKRLAFCHSNVLSHSYCVHQDVMKLAYADTLPNV) are extracellular. A helical membrane pass occupies residues 196-216 (VYGLTAILLVMGVDVMFISLS). The Cytoplasmic segment spans residues 217–236 (YFLIIRTVLQLPSKSERAKA). The helical transmembrane segment at 237–257 (FGTCVSHIGVVLAFYVPLIGL) threads the bilayer. The Extracellular portion of the chain corresponds to 258-272 (SVVHRFGNSLHPIVR). The helical transmembrane segment at 273 to 293 (VVMGDIYLLLPPVINPIIYGA) threads the bilayer. Over 294–320 (KTKQIRTRVLAMFKISCDKDLQAVGGK) the chain is Cytoplasmic.

It belongs to the G-protein coupled receptor 1 family. Highly expressed in the prostate. Also expressed in spleen, liver, olfactory epithelium, retinal pigment epithelium and medulla oblongata. In the retinal pigment epithelium expression is restricted to the pigment cells and choroid (at protein level). Expressed in epidermal melanocytes (at protein level).

It localises to the cell membrane. It is found in the early endosome membrane. Olfactory receptor. Activated by the odorant, beta-ionone, a synthetic terpenoid. The activity of this receptor is probably mediated by G-proteins leading to the elevation of intracellular Ca(2+), cAMP and activation of the protein kinases PKA and MAPK3/MAPK1. Stimulation of OR51E2 by beta-ionone affects melanocyte proliferation, differentiation, and melanogenesis. Activation of OR51E2 by beta-ionone increases proliferation and migration of primary retinal pigment epithelial (RPE) cells. Activated also by the short-chain fatty acids (SCFA) acetate and propionate. In response to SCFA, may positively regulate renin secretion and increase blood pressure. May also be activated by steroid hormones and regulate cell proliferation. Activated by L-lactate in glomus cells. This chain is Olfactory receptor 51E2, found in Homo sapiens (Human).